Consider the following 31-residue polypeptide: Photosystem II reaction center protein M (31 aa).

Residues Ile5 to Ile25 traverse the membrane as a helical segment.

The protein belongs to the PsbM family. PSII is composed of 1 copy each of membrane proteins PsbA, PsbB, PsbC, PsbD, PsbE, PsbF, PsbH, PsbI, PsbJ, PsbK, PsbL, PsbM, PsbT, PsbX, PsbY, PsbZ, Psb30/Ycf12, at least 3 peripheral proteins of the oxygen-evolving complex and a large number of cofactors. It forms dimeric complexes.

It localises to the plastid membrane. In terms of biological role, one of the components of the core complex of photosystem II (PSII). PSII is a light-driven water:plastoquinone oxidoreductase that uses light energy to abstract electrons from H(2)O, generating O(2) and a proton gradient subsequently used for ATP formation. It consists of a core antenna complex that captures photons, and an electron transfer chain that converts photonic excitation into a charge separation. This subunit is found at the monomer-monomer interface. The sequence is that of Photosystem II reaction center protein M from Cuscuta reflexa (Southern Asian dodder).